The primary structure comprises 82 residues: MVTIRLARGGAKKRPFYQIVVTDSRNARDGRFIERIGFFNPIATGQAEGLRLDLDRIEHWVGQGATVSERVSALIKDAKKAA.

It belongs to the bacterial ribosomal protein bS16 family.

This chain is Small ribosomal subunit protein bS16, found in Sodalis glossinidius (strain morsitans).